Consider the following 175-residue polypeptide: Regenerating islet-derived protein 3-beta (175 aa).

The first 26 residues, 1–26 (MLPPTACSVMSWMLLSCLMLLSQVQG), serve as a signal peptide directing secretion. Positions 27–37 (EDSLKNIPSAR) are excised as a propeptide. 3 disulfide bridges follow: cysteine 40/cysteine 51, cysteine 68/cysteine 171, and cysteine 146/cysteine 163. One can recognise a C-type lectin domain in the interval 47 to 172 (YGSYCYALFQ…CEVKLPYVCK (126 aa)). Histidine 107 contributes to the Zn(2+) binding site. Residues 114–116 (EPN) carry the EPN motif. Zn(2+) is bound at residue glutamate 121.

Forms a hexameric membrane-permeabilizing oligomeric pore on membrane phospholipids. The hexamer is formed by three dimers related by helical symmetry. Forms filaments, filamentation traps pore complexes and limits damage to host cells. Interacts with EXTL3. In terms of processing, proteolytic processing by trypsin removes an inhibitory N-terminal propeptide and is essential for peptidoglycan binding and antibacterial activity. As to expression, constitutively expressed in the small intestine, moderately in colon and at an extremely low level in healthy pancreas.

Its subcellular location is the secreted. With respect to regulation, lipopolysaccharide inhibits pore-forming activity, explaining why is bactericidal for Gram-positive but not Gram-negative bacteria. Bactericidal C-type lectin which acts against several intestinal Gram-positive and Gram-negative bacteria. Lacks antibacterial activity against S.typhimurium. May play a role in protection against infection with S.enteritidis by inhibiting its translocation from the gut lumen into intestinal tissues and further extraintestinal tissues. Its function is as follows. Acts as a hormone in response to different stimuli. Secreted by different cell types to activate its receptor EXTL3 and induce cell specific signaling pathways. In pancreas, is able stimulate cell proliferation. The chain is Regenerating islet-derived protein 3-beta from Mus musculus (Mouse).